The chain runs to 90 residues: Molybdopterin synthase sulfur carrier subunit (90 aa).

G90 is modified (1-thioglycine; alternate). G90 is modified (glycyl adenylate; alternate).

Belongs to the MoaD family. MOCS2A subfamily. Heterotetramer; composed of 2 small (Mocs2A) and 2 large (Mocs2B) subunits. Post-translationally, C-terminal thiocarboxylation occurs in 2 steps, it is first acyl-adenylated (-COAMP) via the hesA/moeB/thiF part of MOCS3, then thiocarboxylated (-COSH) via the rhodanese domain of MOCS3.

It localises to the cytoplasm. Its pathway is cofactor biosynthesis; molybdopterin biosynthesis. Acts as a sulfur carrier required for molybdopterin biosynthesis. Component of the molybdopterin synthase complex that catalyzes the conversion of precursor Z into molybdopterin by mediating the incorporation of 2 sulfur atoms into precursor Z to generate a dithiolene group. In the complex, serves as sulfur donor by being thiocarboxylated (-COSH) at its C-terminus by MOCS3. After interaction with Mocs2B, the sulfur is then transferred to precursor Z to form molybdopterin. The chain is Molybdopterin synthase sulfur carrier subunit from Drosophila simulans (Fruit fly).